We begin with the raw amino-acid sequence, 1439 residues long: Gag-Pol polyprotein (1439 aa).

The N-myristoyl glycine; by host moiety is linked to residue Gly-2. The interaction with Gp41 stretch occupies residues 7 to 31; the sequence is ILRGEKLDAWEKIKLRPGGKKHYML. The segment at 8-43 is interaction with host CALM1; that stretch reads LRGEKLDAWEKIKLRPGGKKHYMLKHLVWANRELEK. Residues 12 to 19 are interaction with host AP3D1; sequence KLDAWEKI. The tract at residues 14 to 33 is interaction with membrane phosphatidylinositol 4,5-bisphosphate and RNA; it reads DAWEKIKLRPGGKKHYMLKH. The short motif at 16 to 22 is the Nuclear export signal element; it reads WEKIKLR. A Nuclear localization signal motif is present at residues 26–32; the sequence is KKHYMLK. The segment at 73–77 is interaction with membrane phosphatidylinositol 4,5-bisphosphate; sequence EELKS. The segment at 105–128 is disordered; the sequence is EEEQNESQQKTQQAGAADRGKDSQ. A Phosphotyrosine; by host modification is found at Tyr-130. An interaction with human PPIA/CYPA and NUP153 region spans residues 187 to 225; sequence NTVGGHQAAMQMLKDTINEEAAEWDRLHPVHAGPVAPGQ. The interval 275-361 is dimerization/Multimerization of capsid protein p24; the sequence is YSPVSILDIK…GGPAHKARVL (87 aa). CCHC-type zinc fingers lie at residues 387–404 and 408–425; these read IKCF…NCRA and KGCW…DCTE. The disordered stretch occupies residues 441–485; that stretch reads KAREFPSEQTRANSPTRESQTRANSPTTRELQVRGSNTFSEAGAE. The segment covering 447 to 480 has biased composition (polar residues); it reads SEQTRANSPTRESQTRANSPTTRELQVRGSNTFS. Residues 493 to 497 form a dimerization of protease region; the sequence is PQITL. Positions 512–581 constitute a Peptidase A2 domain; that stretch reads KEALLDTGAD…TPVNIIGRNM (70 aa). The active-site For protease activity; shared with dimeric partner is the Asp-517. 2 dimerization of protease regions span residues 541 to 547 and 580 to 592; these read GIGGFIK and NMLT…LNFP. One can recognise a Reverse transcriptase domain in the interval 635-825; the sequence is EGKISRIGPE…PPFLWMGYEL (191 aa). Residues Asp-701, Asp-776, and Asp-777 each coordinate Mg(2+). The interval 818–826 is RT 'primer grip'; it reads FLWMGYELH. The Tryptophan repeat motif signature appears at 989 to 1005; sequence WEAWWTDYWQATWIPEW. Positions 1025-1148 constitute an RNase H type-1 domain; that stretch reads IAGVETFYVD…VDKLVSSGIR (124 aa). Asp-1034, Glu-1069, Asp-1089, and Asp-1140 together coordinate Mg(2+). The segment at 1154–1195 adopts an Integrase-type zinc-finger fold; sequence DGIDKAQEEHEKYHSNWRAMANEFNIPPVVPKEIVACCDKCQ. Residues His-1163, His-1167, Cys-1191, and Cys-1194 each contribute to the Zn(2+) site. Positions 1205–1355 constitute an Integrase catalytic domain; the sequence is VNCSPGIWQL…SAGERIIDII (151 aa). The Mg(2+) site is built by Asp-1215, Asp-1267, and Glu-1303. Residues 1374 to 1421 constitute a DNA-binding region (integrase-type); the sequence is FRVYYRDSRDPIWKGPAKLLWKGEGAVVIQDNSDIKVVPRRKAKIIRD.

In terms of assembly, homotrimer; further assembles as hexamers of trimers. Interacts with gp41 (via C-terminus). Interacts with host CALM1; this interaction induces a conformational change in the Matrix protein, triggering exposure of the myristate group. Interacts with host AP3D1; this interaction allows the polyprotein trafficking to multivesicular bodies during virus assembly. Part of the pre-integration complex (PIC) which is composed of viral genome, matrix protein, Vpr and integrase. Homodimer; the homodimer further multimerizes as homohexamers or homopentamers. Interacts with human PPIA/CYPA; This interaction stabilizes the capsid. Interacts with human NUP153. Interacts with host PDZD8; this interaction stabilizes the capsid. Interacts with monkey TRIM5; this interaction destabilizes the capsid. As to quaternary structure, homodimer, whose active site consists of two apposed aspartic acid residues. In terms of assembly, heterodimer of p66 RT and p51 RT (RT p66/p51). Heterodimerization of RT is essential for DNA polymerase activity. The overall folding of the subdomains is similar in p66 RT and p51 RT but the spatial arrangements of the subdomains are dramatically different. Homotetramer; may further associate as a homohexadecamer. Part of the pre-integration complex (PIC) which is composed of viral genome, matrix protein, Vpr and integrase. Interacts with human SMARCB1/INI1 and human PSIP1/LEDGF isoform 1. Interacts with human KPNA3; this interaction might play a role in nuclear import of the pre-integration complex. Interacts with human NUP153; this interaction might play a role in nuclear import of the pre-integration complex. Mg(2+) serves as cofactor. Specific enzymatic cleavages by the viral protease yield mature proteins. The protease is released by autocatalytic cleavage. The polyprotein is cleaved during and after budding, this process is termed maturation. Proteolytic cleavage of p66 RT removes the RNase H domain to yield the p51 RT subunit. Nucleocapsid protein p7 might be further cleaved after virus entry. Post-translationally, tyrosine phosphorylated presumably in the virion by a host kinase. Phosphorylation is apparently not a major regulator of membrane association. In terms of processing, phosphorylated possibly by host MAPK1; this phosphorylation is necessary for Pin1-mediated virion uncoating. Methylated by host PRMT6, impairing its function by reducing RNA annealing and the initiation of reverse transcription.

The protein localises to the host cell membrane. The protein resides in the host endosome. It localises to the host multivesicular body. Its subcellular location is the virion membrane. It is found in the host nucleus. The protein localises to the host cytoplasm. The protein resides in the virion. The catalysed reaction is Specific for a P1 residue that is hydrophobic, and P1' variable, but often Pro.. It catalyses the reaction Endohydrolysis of RNA in RNA/DNA hybrids. Three different cleavage modes: 1. sequence-specific internal cleavage of RNA. Human immunodeficiency virus type 1 and Moloney murine leukemia virus enzymes prefer to cleave the RNA strand one nucleotide away from the RNA-DNA junction. 2. RNA 5'-end directed cleavage 13-19 nucleotides from the RNA end. 3. DNA 3'-end directed cleavage 15-20 nucleotides away from the primer terminus.. The enzyme catalyses 3'-end directed exonucleolytic cleavage of viral RNA-DNA hybrid.. It carries out the reaction DNA(n) + a 2'-deoxyribonucleoside 5'-triphosphate = DNA(n+1) + diphosphate. With respect to regulation, protease: The viral protease is inhibited by many synthetic protease inhibitors (PIs), such as amprenavir, atazanavir, indinavir, loprinavir, nelfinavir, ritonavir and saquinavir. Use of protease inhibitors in tritherapy regimens permit more ambitious therapeutic strategies. Reverse transcriptase/ribonuclease H: RT can be inhibited either by nucleoside RT inhibitors (NRTIs) or by non nucleoside RT inhibitors (NNRTIs). NRTIs act as chain terminators, whereas NNRTIs inhibit DNA polymerization by binding a small hydrophobic pocket near the RT active site and inducing an allosteric change in this region. Classical NRTIs are abacavir, adefovir (PMEA), didanosine (ddI), lamivudine (3TC), stavudine (d4T), tenofovir (PMPA), zalcitabine (ddC), and zidovudine (AZT). Classical NNRTIs are atevirdine (BHAP U-87201E), delavirdine, efavirenz (DMP-266), emivirine (I-EBU), and nevirapine (BI-RG-587). The tritherapies used as a basic effective treatment of AIDS associate two NRTIs and one NNRTI. Functionally, mediates, with Gag polyprotein, the essential events in virion assembly, including binding the plasma membrane, making the protein-protein interactions necessary to create spherical particles, recruiting the viral Env proteins, and packaging the genomic RNA via direct interactions with the RNA packaging sequence (Psi). Gag-Pol polyprotein may regulate its own translation, by the binding genomic RNA in the 5'-UTR. At low concentration, the polyprotein would promote translation, whereas at high concentration, the polyprotein would encapsidate genomic RNA and then shut off translation. In terms of biological role, targets the polyprotein to the plasma membrane via a multipartite membrane-binding signal, that includes its myristoylated N-terminus. Matrix protein is part of the pre-integration complex. Implicated in the release from host cell mediated by Vpu. Binds to RNA. Forms the conical core that encapsulates the genomic RNA-nucleocapsid complex in the virion. Most core are conical, with only 7% tubular. The core is constituted by capsid protein hexamer subunits. The core is disassembled soon after virion entry. Host restriction factors such as TRIM5-alpha or TRIMCyp bind retroviral capsids and cause premature capsid disassembly, leading to blocks in reverse transcription. Capsid restriction by TRIM5 is one of the factors which restricts HIV-1 to the human species. Host PIN1 apparently facilitates the virion uncoating. On the other hand, interactions with PDZD8 or CYPA stabilize the capsid. Its function is as follows. Encapsulates and protects viral dimeric unspliced genomic RNA (gRNA). Binds these RNAs through its zinc fingers. Acts as a nucleic acid chaperone which is involved in rearangement of nucleic acid secondary structure during gRNA retrotranscription. Also facilitates template switch leading to recombination. As part of the polyprotein, participates in gRNA dimerization, packaging, tRNA incorporation and virion assembly. Functionally, aspartyl protease that mediates proteolytic cleavages of Gag and Gag-Pol polyproteins during or shortly after the release of the virion from the plasma membrane. Cleavages take place as an ordered, step-wise cascade to yield mature proteins. This process is called maturation. Displays maximal activity during the budding process just prior to particle release from the cell. Also cleaves Nef and Vif, probably concomitantly with viral structural proteins on maturation of virus particles. Hydrolyzes host EIF4GI and PABP1 in order to shut off the capped cellular mRNA translation. The resulting inhibition of cellular protein synthesis serves to ensure maximal viral gene expression and to evade host immune response. Also mediates cleavage of host YTHDF3. Mediates cleavage of host CARD8, thereby activating the CARD8 inflammasome, leading to the clearance of latent HIV-1 in patient CD4(+) T-cells after viral reactivation; in contrast, HIV-1 can evade CARD8-sensing when its protease remains inactive in infected cells prior to viral budding. In terms of biological role, multifunctional enzyme that converts the viral RNA genome into dsDNA in the cytoplasm, shortly after virus entry into the cell. This enzyme displays a DNA polymerase activity that can copy either DNA or RNA templates, and a ribonuclease H (RNase H) activity that cleaves the RNA strand of RNA-DNA heteroduplexes in a partially processive 3' to 5' endonucleasic mode. Conversion of viral genomic RNA into dsDNA requires many steps. A tRNA(3)-Lys binds to the primer-binding site (PBS) situated at the 5'-end of the viral RNA. RT uses the 3' end of the tRNA primer to perform a short round of RNA-dependent minus-strand DNA synthesis. The reading proceeds through the U5 region and ends after the repeated (R) region which is present at both ends of viral RNA. The portion of the RNA-DNA heteroduplex is digested by the RNase H, resulting in a ssDNA product attached to the tRNA primer. This ssDNA/tRNA hybridizes with the identical R region situated at the 3' end of viral RNA. This template exchange, known as minus-strand DNA strong stop transfer, can be either intra- or intermolecular. RT uses the 3' end of this newly synthesized short ssDNA to perform the RNA-dependent minus-strand DNA synthesis of the whole template. RNase H digests the RNA template except for two polypurine tracts (PPTs) situated at the 5'-end and near the center of the genome. It is not clear if both polymerase and RNase H activities are simultaneous. RNase H probably can proceed both in a polymerase-dependent (RNA cut into small fragments by the same RT performing DNA synthesis) and a polymerase-independent mode (cleavage of remaining RNA fragments by free RTs). Secondly, RT performs DNA-directed plus-strand DNA synthesis using the PPTs that have not been removed by RNase H as primers. PPTs and tRNA primers are then removed by RNase H. The 3' and 5' ssDNA PBS regions hybridize to form a circular dsDNA intermediate. Strand displacement synthesis by RT to the PBS and PPT ends produces a blunt ended, linear dsDNA copy of the viral genome that includes long terminal repeats (LTRs) at both ends. Catalyzes viral DNA integration into the host chromosome, by performing a series of DNA cutting and joining reactions. This enzyme activity takes place after virion entry into a cell and reverse transcription of the RNA genome in dsDNA. The first step in the integration process is 3' processing. This step requires a complex comprising the viral genome, matrix protein, Vpr and integrase. This complex is called the pre-integration complex (PIC). The integrase protein removes 2 nucleotides from each 3' end of the viral DNA, leaving recessed CA OH's at the 3' ends. In the second step, the PIC enters cell nucleus. This process is mediated through integrase and Vpr proteins, and allows the virus to infect a non dividing cell. This ability to enter the nucleus is specific of lentiviruses, other retroviruses cannot and rely on cell division to access cell chromosomes. In the third step, termed strand transfer, the integrase protein joins the previously processed 3' ends to the 5' ends of strands of target cellular DNA at the site of integration. The 5'-ends are produced by integrase-catalyzed staggered cuts, 5 bp apart. A Y-shaped, gapped, recombination intermediate results, with the 5'-ends of the viral DNA strands and the 3' ends of target DNA strands remaining unjoined, flanking a gap of 5 bp. The last step is viral DNA integration into host chromosome. This involves host DNA repair synthesis in which the 5 bp gaps between the unjoined strands are filled in and then ligated. Since this process occurs at both cuts flanking the HIV genome, a 5 bp duplication of host DNA is produced at the ends of HIV-1 integration. Alternatively, Integrase may catalyze the excision of viral DNA just after strand transfer, this is termed disintegration. In Human immunodeficiency virus type 1 group M subtype C (isolate ETH2220) (HIV-1), this protein is Gag-Pol polyprotein (gag-pol).